The sequence spans 831 residues: Cysteine--tRNA ligase, cytoplasmic (831 aa).

Ala-2 bears the N-acetylalanine mark. The residue at position 102 (Ser-102) is a Phosphoserine. Residue Cys-138 participates in Zn(2+) binding. Gly-139 contacts L-cysteine. The 'HIGH' region motif lies at 140–150; that stretch reads PTVYDASHMGH. Thr-179 contributes to the L-cysteine binding site. A 'KIIK' region motif is present at residues 184-187; the sequence is KIIR. 2 positions are modified to phosphoserine: Ser-388 and Ser-390. Residues Cys-431, His-456, and Glu-460 each coordinate Zn(2+). His-456 lines the L-cysteine pocket. Residues 489-493 carry the 'KMSKS' region motif; sequence KMSKS. Position 492 (Lys-492) interacts with ATP. Over residues 736–762 the composition is skewed to basic and acidic residues; the sequence is GKKRAEEEKRRKKEEAARKKQEQEAAK. Residues 736-766 are disordered; sequence GKKRAEEEKRRKKEEAARKKQEQEAAKLAKM. At Ser-829 the chain carries Phosphoserine.

This sequence belongs to the class-I aminoacyl-tRNA synthetase family. In terms of assembly, homodimer. Requires Zn(2+) as cofactor.

It localises to the cytoplasm. The catalysed reaction is tRNA(Cys) + L-cysteine + ATP = L-cysteinyl-tRNA(Cys) + AMP + diphosphate. In terms of biological role, catalyzes the ATP-dependent ligation of cysteine to tRNA(Cys). The chain is Cysteine--tRNA ligase, cytoplasmic (Cars1) from Mus musculus (Mouse).